The chain runs to 101 residues: Small ribosomal subunit protein bS18c (101 aa).

Residues 1–19 are compositionally biased toward basic residues; the sequence is MDKSKQPFHKTKRSFRRRL. Residues 1 to 23 are disordered; that stretch reads MDKSKQPFHKTKRSFRRRLPPIG.

Belongs to the bacterial ribosomal protein bS18 family. Part of the 30S ribosomal subunit.

Its subcellular location is the plastid. It is found in the chloroplast. The polypeptide is Small ribosomal subunit protein bS18c (Lemna minor (Common duckweed)).